The sequence spans 139 residues: Invertebrate-type lysozyme 2 (139 aa).

The first 18 residues, 1–18 (MFVKAILLLSIAVAYASA), serve as a signal peptide directing secretion. The I-type lysozyme domain maps to 19–138 (DCLHCICMRE…WKGVHSCCGC (120 aa)). Disulfide bonds link cysteine 20/cysteine 106, cysteine 23/cysteine 138, cysteine 25/cysteine 31, cysteine 36/cysteine 45, cysteine 58/cysteine 86, cysteine 76/cysteine 82, and cysteine 98/cysteine 120. Glutamate 28 functions as the Proton donor in the catalytic mechanism. Aspartate 39 serves as the catalytic Nucleophile. 51-57 (KIPYYED) is a substrate binding site. Substrate contacts are provided by residues tyrosine 90 and 113-115 (HNG).

The protein belongs to the glycosyl hydrolase 22 family. Type-I lysozyme subfamily. Expressed in pharyngeal muscle cell pm3, nerve ring and intestine.

It catalyses the reaction Hydrolysis of (1-&gt;4)-beta-linkages between N-acetylmuramic acid and N-acetyl-D-glucosamine residues in a peptidoglycan and between N-acetyl-D-glucosamine residues in chitodextrins.. Its function is as follows. Has bacteriolytic activity against Gram-positive bacteria. May play a role in resistance to Gram-positive bacterium S.aureus infection. The sequence is that of Invertebrate-type lysozyme 2 from Caenorhabditis elegans.